We begin with the raw amino-acid sequence, 294 residues long: Elongation factor Ts (294 aa).

The interval T79–V82 is involved in Mg(2+) ion dislocation from EF-Tu.

Belongs to the EF-Ts family.

The protein resides in the cytoplasm. Functionally, associates with the EF-Tu.GDP complex and induces the exchange of GDP to GTP. It remains bound to the aminoacyl-tRNA.EF-Tu.GTP complex up to the GTP hydrolysis stage on the ribosome. The protein is Elongation factor Ts of Geobacillus sp. (strain WCH70).